A 584-amino-acid polypeptide reads, in one-letter code: Galectin-3-binding protein (584 aa).

An N-terminal signal peptide occupies residues Met-1 to Gly-18. The SRCR domain occupies Met-24 to Thr-124. 3 disulfides stabilise this stretch: Cys-49–Cys-113, Cys-62–Cys-123, and Cys-93–Cys-103. N-linked (GlcNAc...) asparagine glycosylation is present at Asn-69. Asn-125 and Asn-192 each carry an N-linked (GlcNAc...) asparagine glycan. The BTB domain occupies Cys-153–Leu-221. Residues Pro-260 to Gln-359 enclose the BACK domain. 4 N-linked (GlcNAc...) asparagine glycosylation sites follow: Asn-361, Asn-397, Asn-550, and Asn-579.

As to quaternary structure, homodimers and homomultimers. The multimers form ring-like structures with a diameter of 30-40 nm. Binds LGALS1 and LGALS3. Binds ITGB1, COL4A1, COL5A1, COL6A1, FN1 and NID. Interacts with the gamma-tubulin ring complex (gamma-TuRC), composed of gamma-tubulin, TUBGCP2, TUBGCP3, TUBGCP4, TUBGCP5 and TUBGCP6. The unglycosylated form interacts with PDE4DIP; this interaction, which is PDE4DIP isoform-specific, may connect a pericentrosomal complex, made of AKAP9, CDK5RAP2, EB1/MAPRE1 and PDE4DIP, to the gamma-tubulin ring complex (gamma-TuRC) to promote microtubule assembly and acetylation.

The protein localises to the secreted. Its subcellular location is the extracellular space. It is found in the extracellular matrix. Its function is as follows. Promotes integrin-mediated cell adhesion. May stimulate host defense against viruses and tumor cells. The polypeptide is Galectin-3-binding protein (LGALS3BP) (Pongo abelii (Sumatran orangutan)).